Consider the following 410-residue polypeptide: Argininosuccinate synthase (410 aa).

10–18 (AYSGGLDTS) contacts ATP. L-citrulline contacts are provided by Tyr-88 and Ser-93. Gly-118 lines the ATP pocket. L-aspartate-binding residues include Thr-120, Asn-124, and Asp-125. Asn-124 contacts L-citrulline. 5 residues coordinate L-citrulline: Arg-128, Ser-177, Ser-186, Glu-262, and Tyr-274.

The protein belongs to the argininosuccinate synthase family. Type 1 subfamily. In terms of assembly, homotetramer.

The protein resides in the cytoplasm. The enzyme catalyses L-citrulline + L-aspartate + ATP = 2-(N(omega)-L-arginino)succinate + AMP + diphosphate + H(+). The protein operates within amino-acid biosynthesis; L-arginine biosynthesis; L-arginine from L-ornithine and carbamoyl phosphate: step 2/3. The polypeptide is Argininosuccinate synthase (Caldanaerobacter subterraneus subsp. tengcongensis (strain DSM 15242 / JCM 11007 / NBRC 100824 / MB4) (Thermoanaerobacter tengcongensis)).